Here is a 357-residue protein sequence, read N- to C-terminus: GDSL esterase/lipase At5g45950 (357 aa).

The first 23 residues, 1–23 (MLLVAFVTLLVAVALQPLPSVLS), serve as a signal peptide directing secretion. An N-linked (GlcNAc...) asparagine glycan is attached at Asn-37. Catalysis depends on Ser-47, which acts as the Nucleophile. Residue Asn-132 is glycosylated (N-linked (GlcNAc...) asparagine). Catalysis depends on residues Asp-331 and His-334.

It belongs to the 'GDSL' lipolytic enzyme family.

The protein resides in the secreted. The protein is GDSL esterase/lipase At5g45950 of Arabidopsis thaliana (Mouse-ear cress).